A 1103-amino-acid chain; its full sequence is Detocs histidine-protein kinase DtcA (1103 aa).

Histidine 758 carries the post-translational modification Phosphohistidine; by autocatalysis. One copy of the TPR repeat lies at 818–851; sequence TIINDAKEKVHINTGEFIESAKVFNYAIEIEFVE.

Autophosphorylated.

It catalyses the reaction ATP + protein L-histidine = ADP + protein N-phospho-L-histidine.. Sensor-kinase member of the two-component regulatory system Detocs that confers resistance to bacteriophage. When the system (DtcA-DtcB-DtcC) is expressed in a susceptible E.coli (strain MG1655) it confers resistance to bacteriophages T2, T4, T5, T7, SECphi4, SECphi6 and SECphi27; the level of resistance varies, resistance to T2, T7 and SECphi4 is not very high. DtcA (this subunit) probably autophosphorylates upon sensing viral infection, and subsequently transfers the phosphate signal to DtcC which activates it, leading to an antiviral defense; DtcB may scavenge phosphorylation signals from accidental activation of DtcA. The sequence is that of Detocs histidine-protein kinase DtcA from Enterobacter cloacae (strain JD6301).